The sequence spans 971 residues: Exportin-2 (971 aa).

An N-acetylmethionine modification is found at M1. The Importin N-terminal domain maps to 29–102 (AEKFLESVEG…KANIVHLMLS (74 aa)). At S112 the chain carries Phosphoserine. N6-acetyllysine occurs at positions 574 and 824. Residue S931 is modified to Phosphoserine.

It belongs to the XPO2/CSE1 family. Found in a complex with CSE1L/XPO2, Ran and KPNA2. Binds with high affinity to importin-alpha only in the presence of RanGTP. The complex is dissociated by the combined action of RanBP1 and RanGAP1. Interacts with CFTR. Detected in brain, placenta, ovary, testis and trachea (at protein level). Widely expressed. Highly expressed in testis and in proliferating cells.

It localises to the cytoplasm. It is found in the nucleus. Functionally, export receptor for importin-alpha. Mediates importin-alpha re-export from the nucleus to the cytoplasm after import substrates (cargos) have been released into the nucleoplasm. In the nucleus binds cooperatively to importin-alpha and to the GTPase Ran in its active GTP-bound form. Docking of this trimeric complex to the nuclear pore complex (NPC) is mediated through binding to nucleoporins. Upon transit of a nuclear export complex into the cytoplasm, disassembling of the complex and hydrolysis of Ran-GTP to Ran-GDP (induced by RANBP1 and RANGAP1, respectively) cause release of the importin-alpha from the export receptor. CSE1L/XPO2 then return to the nuclear compartment and mediate another round of transport. The directionality of nuclear export is thought to be conferred by an asymmetric distribution of the GTP- and GDP-bound forms of Ran between the cytoplasm and nucleus. This chain is Exportin-2 (CSE1L), found in Homo sapiens (Human).